Reading from the N-terminus, the 308-residue chain is N-acetylgalactosamine kinase AgaK (308 aa).

ATP contacts are provided by residues 4 to 11 (GLDIGGTK) and 132 to 139 (GTGGGLCI). Residues histidine 156, cysteine 174, cysteine 176, and cysteine 181 each coordinate Zn(2+).

It belongs to the ROK (NagC/XylR) family.

It is found in the cytoplasm. The enzyme catalyses N-acetyl-D-galactosamine + ATP = N-acetyl-D-galactosamine 6-phosphate + ADP + H(+). It catalyses the reaction N-acetyl-D-glucosamine + ATP = N-acetyl-D-glucosamine 6-phosphate + ADP + H(+). Functionally, involved in the pathway of N-acetyl-D-galactosamine degradation. Catalyzes the phosphorylation of N-acetyl-D-galactosamine (GalNAc) to yield D-galactosamine 6-phosphate (GalN-6-P). It can also phosphorylate N-acetylglucosamine (GlcNAc). This is N-acetylgalactosamine kinase AgaK from Shewanella sp. (strain ANA-3).